Consider the following 118-residue polypeptide: UPF0102 protein Sde_3146 (118 aa).

The protein belongs to the UPF0102 family.

This is UPF0102 protein Sde_3146 from Saccharophagus degradans (strain 2-40 / ATCC 43961 / DSM 17024).